The following is a 453-amino-acid chain: Tol-Pal system protein TolB (453 aa).

An N-terminal signal peptide occupies residues 1–31 (MINNLSVSMTKVLKIILTIIIILFNTLSILA).

This sequence belongs to the TolB family. In terms of assembly, the Tol-Pal system is composed of five core proteins: the inner membrane proteins TolA, TolQ and TolR, the periplasmic protein TolB and the outer membrane protein Pal. They form a network linking the inner and outer membranes and the peptidoglycan layer.

It is found in the periplasm. Its function is as follows. Part of the Tol-Pal system, which plays a role in outer membrane invagination during cell division and is important for maintaining outer membrane integrity. In Orientia tsutsugamushi (strain Boryong) (Rickettsia tsutsugamushi), this protein is Tol-Pal system protein TolB.